The following is a 255-amino-acid chain: Proteasome subunit alpha (255 aa).

A disordered region spans residues 224–255 (RLEELLGERGPAQHAPEEPADPEPEPPIAPPG).

It belongs to the peptidase T1A family. In terms of assembly, the 20S proteasome core is composed of 14 alpha and 14 beta subunits that assemble into four stacked heptameric rings, resulting in a barrel-shaped structure. The two inner rings, each composed of seven catalytic beta subunits, are sandwiched by two outer rings, each composed of seven alpha subunits. The catalytic chamber with the active sites is on the inside of the barrel. Has a gated structure, the ends of the cylinder being occluded by the N-termini of the alpha-subunits. Is capped by the proteasome-associated ATPase, ARC.

The protein resides in the cytoplasm. The protein operates within protein degradation; proteasomal Pup-dependent pathway. The formation of the proteasomal ATPase ARC-20S proteasome complex, likely via the docking of the C-termini of ARC into the intersubunit pockets in the alpha-rings, may trigger opening of the gate for substrate entry. Interconversion between the open-gate and close-gate conformations leads to a dynamic regulation of the 20S proteasome proteolysis activity. Functionally, component of the proteasome core, a large protease complex with broad specificity involved in protein degradation. This Nocardioides sp. (strain ATCC BAA-499 / JS614) protein is Proteasome subunit alpha.